The chain runs to 515 residues: NAD(P)H-quinone oxidoreductase subunit 2 (515 aa).

14 helical membrane passes run threonine 14 to isoleucine 34, tryptophan 42 to tryptophan 62, leucine 79 to isoleucine 99, leucine 109 to glycine 128, leucine 132 to glycine 151, leucine 167 to leucine 187, leucine 206 to valine 226, proline 240 to isoleucine 260, tryptophan 274 to leucine 294, methionine 302 to threonine 322, leucine 330 to phenylalanine 350, leucine 374 to glycine 394, isoleucine 396 to leucine 416, and valine 462 to phenylalanine 482.

The protein belongs to the complex I subunit 2 family. NDH-1 can be composed of about 15 different subunits; different subcomplexes with different compositions have been identified which probably have different functions.

The protein resides in the cellular thylakoid membrane. It carries out the reaction a plastoquinone + NADH + (n+1) H(+)(in) = a plastoquinol + NAD(+) + n H(+)(out). The enzyme catalyses a plastoquinone + NADPH + (n+1) H(+)(in) = a plastoquinol + NADP(+) + n H(+)(out). Its function is as follows. NDH-1 shuttles electrons from an unknown electron donor, via FMN and iron-sulfur (Fe-S) centers, to quinones in the respiratory and/or the photosynthetic chain. The immediate electron acceptor for the enzyme in this species is believed to be plastoquinone. Couples the redox reaction to proton translocation, and thus conserves the redox energy in a proton gradient. Cyanobacterial NDH-1 also plays a role in inorganic carbon-concentration. This is NAD(P)H-quinone oxidoreductase subunit 2 from Thermosynechococcus vestitus (strain NIES-2133 / IAM M-273 / BP-1).